Here is an 89-residue protein sequence, read N- to C-terminus: Progonadoliberin-1 (89 aa).

The first 23 residues, 1 to 23 (MKAFPTFALLFLVLLFSAHVSDA), serve as a signal peptide directing secretion. The residue at position 24 (glutamine 24) is a Pyrrolidone carboxylic acid. Position 33 is a glycine amide (glycine 33).

Belongs to the GnRH family. As to expression, expressed in the forebrain from larval stages.

Its subcellular location is the secreted. In terms of biological role, stimulates the secretion of gonadotropins. The chain is Progonadoliberin-1 (gnrh1) from Xenopus laevis (African clawed frog).